Consider the following 143-residue polypeptide: Hemoglobin cathodic subunit alpha (143 aa).

Position 1 is an N-acetylserine (Ser1). The 143-residue stretch at 1–143 (SLAPGDKTVV…VCAALSDKYR (143 aa)) folds into the Globin domain. Residue His59 coordinates O2. A heme b-binding site is contributed by His89.

Belongs to the globin family. Heterotetramer of two alpha chains and two beta chains. As to expression, red blood cells.

Its function is as follows. Involved in oxygen transport from gills to the various peripheral tissues. The protein is Hemoglobin cathodic subunit alpha of Gymnothorax unicolor (Brown moray).